The primary structure comprises 361 residues: Peptide chain release factor 1 (361 aa).

At glutamine 237 the chain carries N5-methylglutamine. Positions 286–296 (EKRRSAEESTR) are enriched in basic and acidic residues. The tract at residues 286–305 (EKRRSAEESTRRNLVSSGDR) is disordered.

The protein belongs to the prokaryotic/mitochondrial release factor family. In terms of processing, methylated by PrmC. Methylation increases the termination efficiency of RF1.

It is found in the cytoplasm. In terms of biological role, peptide chain release factor 1 directs the termination of translation in response to the peptide chain termination codons UAG and UAA. In Shewanella pealeana (strain ATCC 700345 / ANG-SQ1), this protein is Peptide chain release factor 1.